We begin with the raw amino-acid sequence, 147 residues long: UPF0306 protein KPK_0562 (147 aa).

The protein belongs to the UPF0306 family.

The polypeptide is UPF0306 protein KPK_0562 (Klebsiella pneumoniae (strain 342)).